The chain runs to 181 residues: CDP-archaeol synthase (181 aa).

Transmembrane regions (helical) follow at residues 7–27, 55–75, 88–108, 126–146, and 147–167; these read VVWA…AVLA, LIGT…TPSV, LRAG…ASFL, LDFV…WFTE, and TFTL…HVVT.

The protein belongs to the CDP-archaeol synthase family. Mg(2+) serves as cofactor.

The protein localises to the cell membrane. The enzyme catalyses 2,3-bis-O-(geranylgeranyl)-sn-glycerol 1-phosphate + CTP + H(+) = CDP-2,3-bis-O-(geranylgeranyl)-sn-glycerol + diphosphate. It functions in the pathway membrane lipid metabolism; glycerophospholipid metabolism. In terms of biological role, catalyzes the formation of CDP-2,3-bis-(O-geranylgeranyl)-sn-glycerol (CDP-archaeol) from 2,3-bis-(O-geranylgeranyl)-sn-glycerol 1-phosphate (DGGGP) and CTP. This reaction is the third ether-bond-formation step in the biosynthesis of archaeal membrane lipids. This chain is CDP-archaeol synthase, found in Haloarcula marismortui (strain ATCC 43049 / DSM 3752 / JCM 8966 / VKM B-1809) (Halobacterium marismortui).